Reading from the N-terminus, the 349-residue chain is 3-dehydroquinate synthase (349 aa).

Residues 63–68 (DGEDYK), 97–101 (GVIGD), 121–122 (TT), Lys-134, Lys-143, and 161–164 (FLQT) each bind NAD(+). Residues Glu-176, His-235, and His-252 each contribute to the Zn(2+) site.

The protein belongs to the sugar phosphate cyclases superfamily. Dehydroquinate synthase family. Co(2+) serves as cofactor. Requires Zn(2+) as cofactor. It depends on NAD(+) as a cofactor.

The protein resides in the cytoplasm. The enzyme catalyses 7-phospho-2-dehydro-3-deoxy-D-arabino-heptonate = 3-dehydroquinate + phosphate. It participates in metabolic intermediate biosynthesis; chorismate biosynthesis; chorismate from D-erythrose 4-phosphate and phosphoenolpyruvate: step 2/7. Catalyzes the conversion of 3-deoxy-D-arabino-heptulosonate 7-phosphate (DAHP) to dehydroquinate (DHQ). The chain is 3-dehydroquinate synthase from Nitratiruptor sp. (strain SB155-2).